We begin with the raw amino-acid sequence, 422 residues long: Tyrosine--tRNA ligase 1 (422 aa).

Position 35 (Y35) interacts with L-tyrosine. The 'HIGH' region signature appears at 40–49 (PTADSLHIGH). Residues Y170 and Q174 each contribute to the L-tyrosine site. Positions 232–236 (KFGKT) match the 'KMSKS' region motif. K235 provides a ligand contact to ATP. Positions 355–421 (LSLVDVLVQS…GKKKYFLVTY (67 aa)) constitute an S4 RNA-binding domain.

This sequence belongs to the class-I aminoacyl-tRNA synthetase family. TyrS type 1 subfamily. In terms of assembly, homodimer.

The protein resides in the cytoplasm. It carries out the reaction tRNA(Tyr) + L-tyrosine + ATP = L-tyrosyl-tRNA(Tyr) + AMP + diphosphate + H(+). Functionally, catalyzes the attachment of tyrosine to tRNA(Tyr) in a two-step reaction: tyrosine is first activated by ATP to form Tyr-AMP and then transferred to the acceptor end of tRNA(Tyr). This is Tyrosine--tRNA ligase 1 from Bacillus subtilis (strain 168).